Here is a 360-residue protein sequence, read N- to C-terminus: Peptide chain release factor 1 (360 aa).

Gln-235 carries the N5-methylglutamine modification.

The protein belongs to the prokaryotic/mitochondrial release factor family. Methylated by PrmC. Methylation increases the termination efficiency of RF1.

The protein resides in the cytoplasm. Its function is as follows. Peptide chain release factor 1 directs the termination of translation in response to the peptide chain termination codons UAG and UAA. This chain is Peptide chain release factor 1, found in Paraburkholderia phymatum (strain DSM 17167 / CIP 108236 / LMG 21445 / STM815) (Burkholderia phymatum).